Here is a 313-residue protein sequence, read N- to C-terminus: D-alanine--D-alanine ligase (313 aa).

An ATP-grasp domain is found at 108-308 (KLVWQQTGVP…YSELVVKVLS (201 aa)). Residue 138–193 (VAKLGLPLFVKPASEGSSVAVLKVKTADALPAALEEAATHDKIVIVEKSIEGGGEY) coordinates ATP. 3 residues coordinate Mg(2+): D262, E275, and N277.

This sequence belongs to the D-alanine--D-alanine ligase family. The cofactor is Mg(2+). Mn(2+) serves as cofactor.

The protein localises to the cytoplasm. It catalyses the reaction 2 D-alanine + ATP = D-alanyl-D-alanine + ADP + phosphate + H(+). The protein operates within cell wall biogenesis; peptidoglycan biosynthesis. Its function is as follows. Cell wall formation. This chain is D-alanine--D-alanine ligase, found in Burkholderia cenocepacia (strain ATCC BAA-245 / DSM 16553 / LMG 16656 / NCTC 13227 / J2315 / CF5610) (Burkholderia cepacia (strain J2315)).